The following is a 522-amino-acid chain: MVVSADCRISLSAPSCIRSSSTGLTRHIKLGSFCNGELMGKKLNLSQLPNIRLRSSTNFSQKRILMSLNSVAGESKVQELETEKRDPRTVASIILGGGAGTRLFPLTKRRAKPAVPIGGAYRLIDVPMSNCINSGINKVYILTQYNSASLNRHLARAYNSNGLGFGDGYVEVLAATQTPGESGKRWFQGTADAVRQFHWLFEDARSKDIEDVLILSGDHLYRMDYMDFIQDHRQSGADISISCIPIDDRRASDFGLMKIDDKGRVISFSEKPKGDDLKAMAVDTTILGLSKEEAEKKPYIASMGVYVFKKEILLNLLRWRFPTANDFGSEIIPFSAKEFYVNAYLFNDYWEDIGTIRSFFEANLALTEHPGAFSFYDAAKPIYTSRRNLPPSKIDNSKLIDSIISHGSFLTNCLIEHSIVGIRSRVGSNVQLKDTVMLGADYYETEAEVAALLAEGNVPIGIGENTKIQECIIDKNARVGKNVIIANSEGIQEADRSSDGFYIRSGITVILKNSVIKDGVVI.

The transit peptide at 1–54 directs the protein to the chloroplast; sequence MVVSADCRISLSAPSCIRSSSTGLTRHIKLGSFCNGELMGKKLNLSQLPNIRLR. Position 428 is a phosphoserine (serine 428).

This sequence belongs to the bacterial/plant glucose-1-phosphate adenylyltransferase family. In terms of assembly, heterotetramer. Leaves.

It is found in the plastid. It localises to the chloroplast. The enzyme catalyses alpha-D-glucose 1-phosphate + ATP + H(+) = ADP-alpha-D-glucose + diphosphate. The protein operates within glycan biosynthesis; starch biosynthesis. Activated by 3'phosphoglycerate, inhibited by orthophosphate. Allosteric regulation. Functionally, this protein plays a role in synthesis of starch. It catalyzes the synthesis of the activated glycosyl donor, ADP-glucose from Glc-1-P and ATP. The sequence is that of Glucose-1-phosphate adenylyltransferase large subunit 1, chloroplastic (ADG2) from Arabidopsis thaliana (Mouse-ear cress).